Here is a 116-residue protein sequence, read N- to C-terminus: Proline-rich protein 9 (116 aa).

The sequence is that of Proline-rich protein 9 (PRR9) from Bos taurus (Bovine).